A 134-amino-acid polypeptide reads, in one-letter code: Large ribosomal subunit protein uL22 (134 aa).

The protein belongs to the universal ribosomal protein uL22 family. In terms of assembly, part of the 50S ribosomal subunit.

Functionally, this protein binds specifically to 23S rRNA; its binding is stimulated by other ribosomal proteins, e.g. L4, L17, and L20. It is important during the early stages of 50S assembly. It makes multiple contacts with different domains of the 23S rRNA in the assembled 50S subunit and ribosome. Its function is as follows. The globular domain of the protein is located near the polypeptide exit tunnel on the outside of the subunit, while an extended beta-hairpin is found that lines the wall of the exit tunnel in the center of the 70S ribosome. The polypeptide is Large ribosomal subunit protein uL22 (Rhodococcus jostii (strain RHA1)).